The chain runs to 434 residues: Nicotinate phosphoribosyltransferase (434 aa).

H242 is modified (phosphohistidine; by autocatalysis).

It belongs to the NAPRTase family. Post-translationally, transiently phosphorylated on a His residue during the reaction cycle. Phosphorylation strongly increases the affinity for substrates and increases the rate of nicotinate D-ribonucleotide production. Dephosphorylation regenerates the low-affinity form of the enzyme, leading to product release.

The catalysed reaction is nicotinate + 5-phospho-alpha-D-ribose 1-diphosphate + ATP + H2O = nicotinate beta-D-ribonucleotide + ADP + phosphate + diphosphate. It functions in the pathway cofactor biosynthesis; NAD(+) biosynthesis; nicotinate D-ribonucleotide from nicotinate: step 1/1. Its function is as follows. Catalyzes the synthesis of beta-nicotinate D-ribonucleotide from nicotinate and 5-phospho-D-ribose 1-phosphate at the expense of ATP. The sequence is that of Nicotinate phosphoribosyltransferase from Allorhizobium ampelinum (strain ATCC BAA-846 / DSM 112012 / S4) (Agrobacterium vitis (strain S4)).